A 233-amino-acid polypeptide reads, in one-letter code: Small ribosomal subunit protein uS3 (233 aa).

Positions 39 to 107 constitute a KH type-2 domain; that stretch reads VRQFLMKTLE…PVQINISEVR (69 aa).

This sequence belongs to the universal ribosomal protein uS3 family. As to quaternary structure, part of the 30S ribosomal subunit. Forms a tight complex with proteins S10 and S14.

Its function is as follows. Binds the lower part of the 30S subunit head. Binds mRNA in the 70S ribosome, positioning it for translation. This Buchnera aphidicola subsp. Acyrthosiphon pisum (strain 5A) protein is Small ribosomal subunit protein uS3.